A 140-amino-acid chain; its full sequence is Lymphocyte antigen 6H (140 aa).

A signal peptide spans 1-25; that stretch reads MLPAAMKGLGLVLLAALLCSSPAHG. The region spanning 26-91 is the UPAR/Ly6 domain; it reads LWCQDCTLTT…RHFFSDYLMG (66 aa). 5 cysteine pairs are disulfide-bonded: cysteine 28-cysteine 52, cysteine 31-cysteine 40, cysteine 45-cysteine 73, cysteine 77-cysteine 104, and cysteine 105-cysteine 110. Asparagine 36 is a glycosylation site (N-linked (GlcNAc...) asparagine).

The protein localises to the cell membrane. The chain is Lymphocyte antigen 6H (LY6H) from Bos taurus (Bovine).